Here is a 244-residue protein sequence, read N- to C-terminus: 15,16-dihydrobiliverdin:ferredoxin oxidoreductase (244 aa).

The protein belongs to the HY2 family.

It carries out the reaction 15,16-dihydrobiliverdin + oxidized 2[4Fe-4S]-[ferredoxin] = biliverdin IXalpha + reduced 2[4Fe-4S]-[ferredoxin] + 2 H(+). Its function is as follows. Catalyzes the two-electron reduction of biliverdin IX-alpha at the C15 methine bridge. In Nostoc punctiforme (strain ATCC 29133 / PCC 73102), this protein is 15,16-dihydrobiliverdin:ferredoxin oxidoreductase (pebA).